Reading from the N-terminus, the 827-residue chain is Periplasmic nitrate reductase (827 aa).

The segment at residues 1–32 (MNLSRRDFMKANAALAAASVAGLIIPVKNVNA) is a signal peptide (tat-type signal). In terms of domain architecture, 4Fe-4S Mo/W bis-MGD-type spans 37-93 (ITWDKAVCRFCGTGCAVLVGTKDGRVVASQGDPDAEVNRGLNCIKGYFLPKIMYGKD). The [4Fe-4S] cluster site is built by cysteine 44, cysteine 47, cysteine 51, and cysteine 79. Mo-bis(molybdopterin guanine dinucleotide) contacts are provided by residues lysine 81, glutamine 148, asparagine 173, cysteine 177, 210–217 (WGSNMAEM), 242–246 (STFEH), 261–263 (QSD), methionine 372, glutamine 376, asparagine 482, 508–509 (SD), lysine 531, aspartate 558, and 717–726 (TGRILEHWHT). Substrate is bound at residue phenylalanine 793. Residues asparagine 801 and lysine 818 each contribute to the Mo-bis(molybdopterin guanine dinucleotide) site.

This sequence belongs to the prokaryotic molybdopterin-containing oxidoreductase family. NasA/NapA/NarB subfamily. As to quaternary structure, component of the periplasmic nitrate reductase NapAB complex composed of NapA and NapB. [4Fe-4S] cluster is required as a cofactor. It depends on Mo-bis(molybdopterin guanine dinucleotide) as a cofactor. Predicted to be exported by the Tat system. The position of the signal peptide cleavage has not been experimentally proven.

It localises to the periplasm. The catalysed reaction is 2 Fe(II)-[cytochrome] + nitrate + 2 H(+) = 2 Fe(III)-[cytochrome] + nitrite + H2O. Functionally, catalytic subunit of the periplasmic nitrate reductase complex NapAB. Receives electrons from NapB and catalyzes the reduction of nitrate to nitrite. This Histophilus somni (strain 2336) (Haemophilus somnus) protein is Periplasmic nitrate reductase.